Consider the following 234-residue polypeptide: Ammonia monooxygenase gamma subunit (234 aa).

Positions 1–20 (MRMIKFLLLAILLAPFVAHS) are cleaved as a signal peptide. One can recognise a Cytochrome c domain in the interval 38–193 (ESLQRGAKGF…RFVADLVNYM (156 aa)). Residues Cys51, Cys54, and His55 each coordinate heme c. A helical membrane pass occupies residues 206 to 226 (ELGITVLLFLFGMLGLTYLLK).

The protein belongs to the cytochrome c family. As to quaternary structure, the soluble ammonia monooxygenase is a nonamer composed of three alpha subunits (AmoA), three beta subunits (AmoB) and three gamma subunits (Cytochrome c1 PetC). Heme c serves as cofactor.

Its subcellular location is the cell membrane. The protein localises to the cytoplasm. In terms of biological role, part of the ammonia monooxygenase complex, which catalyzes the oxidation of ammonia to hydroxylamine, the first reaction in the process of ammonia oxidation to nitrite. This is Ammonia monooxygenase gamma subunit from Nitrosomonas europaea (strain ATCC 19718 / CIP 103999 / KCTC 2705 / NBRC 14298).